A 299-amino-acid polypeptide reads, in one-letter code: Peroxisomal biogenesis factor 19 (299 aa).

The disordered stretch occupies residues 1-63 (MAAAEEGCSV…SPGDTAKDAL (63 aa)). Residue A2 is modified to N-acetylalanine. Residues 2–56 (AAAEEGCSVGAEADRELEELLESALDDFDKAKPSPAPPSTTTAPDASGPQKRSPG) are docking to the peroxisome membrane and binding to PEX3. The necessary for PEX19 function on peroxisome biogenesis stretch occupies residues 2-91 (AAAEEGCSVG…QATAEFEKAM (90 aa)). The segment covering 16–27 (RELEELLESALD) has biased composition (acidic residues). Residues S35, S54, and S66 each carry the phosphoserine modification. The residue at position 236 (T236) is a Phosphothreonine. Position 296 is a cysteine methyl ester (C296). C296 carries S-farnesyl cysteine lipidation. A propeptide spans 297 to 299 (LIM) (removed in mature form).

This sequence belongs to the peroxin-19 family. As to quaternary structure, interacts with a broad range of peroxisomal membrane proteins, including PEX3, PEX10, PEX11A, PEX11B, PEX12, PEX13, PEX14 and PEX16, PXMP2/PMP22, PXMP4/PMP24, SLC25A17/PMP34, ABCD1/ALDP, ABCD2/ALDRP, and ABCD3/PMP70. Also interacts with the tumor suppressor CDKN2A/p19ARF. (Microbial infection) Interacts with human cytomegalovirus protein UL37 isoform vMIA; this interaction inhibits the peroxisomal-dependent antiviral signaling. In terms of tissue distribution, ubiquitously expressed. Isoform 1 is strongly predominant in all tissues except in utero where isoform 2 is the main form.

It is found in the cytoplasm. It localises to the peroxisome membrane. In terms of biological role, necessary for early peroxisomal biogenesis. Acts both as a cytosolic chaperone and as an import receptor for peroxisomal membrane proteins (PMPs). Binds and stabilizes newly synthesized PMPs in the cytoplasm by interacting with their hydrophobic membrane-spanning domains, and targets them to the peroxisome membrane by binding to the integral membrane protein PEX3. Excludes CDKN2A from the nucleus and prevents its interaction with MDM2, which results in active degradation of TP53. This chain is Peroxisomal biogenesis factor 19, found in Homo sapiens (Human).